A 154-amino-acid polypeptide reads, in one-letter code: Ribonuclease 8 (154 aa).

The signal sequence occupies residues 1–27 (MAPARAGCCPLLLLLLGLWVAQIPVSA). The active-site Proton acceptor is H42. Cystine bridges form between C64/C118 and C89/C96. Residues 65–69 (KDLNT) and K90 contribute to the substrate site. H149 serves as the catalytic Proton donor.

This sequence belongs to the pancreatic ribonuclease family.

Its subcellular location is the secreted. In terms of biological role, has a low ribonuclease activity. This Chlorocebus aethiops (Green monkey) protein is Ribonuclease 8 (RNASE8).